Consider the following 245-residue polypeptide: 1-(5-phosphoribosyl)-5-[(5-phosphoribosylamino)methylideneamino] imidazole-4-carboxamide isomerase (245 aa).

The Proton acceptor role is filled by Asp-7. Residue Asp-129 is the Proton donor of the active site.

This sequence belongs to the HisA/HisF family.

The protein localises to the cytoplasm. The enzyme catalyses 1-(5-phospho-beta-D-ribosyl)-5-[(5-phospho-beta-D-ribosylamino)methylideneamino]imidazole-4-carboxamide = 5-[(5-phospho-1-deoxy-D-ribulos-1-ylimino)methylamino]-1-(5-phospho-beta-D-ribosyl)imidazole-4-carboxamide. The protein operates within amino-acid biosynthesis; L-histidine biosynthesis; L-histidine from 5-phospho-alpha-D-ribose 1-diphosphate: step 4/9. This Idiomarina loihiensis (strain ATCC BAA-735 / DSM 15497 / L2-TR) protein is 1-(5-phosphoribosyl)-5-[(5-phosphoribosylamino)methylideneamino] imidazole-4-carboxamide isomerase.